The sequence spans 400 residues: Formate-dependent phosphoribosylglycinamide formyltransferase (400 aa).

N(1)-(5-phospho-beta-D-ribosyl)glycinamide contacts are provided by residues 22–23 (EL) and glutamate 82. ATP-binding positions include arginine 115, lysine 157, 162–167 (SSGKGQ), 197–200 (EGFV), and glutamate 205. One can recognise an ATP-grasp domain in the interval 120–315 (RLAAETLGVP…EFELHARAIL (196 aa)). Mg(2+) is bound by residues glutamate 274 and glutamate 286. N(1)-(5-phospho-beta-D-ribosyl)glycinamide is bound by residues aspartate 293, lysine 362, and 369–370 (RR).

It belongs to the PurK/PurT family. In terms of assembly, homodimer.

The enzyme catalyses N(1)-(5-phospho-beta-D-ribosyl)glycinamide + formate + ATP = N(2)-formyl-N(1)-(5-phospho-beta-D-ribosyl)glycinamide + ADP + phosphate + H(+). It functions in the pathway purine metabolism; IMP biosynthesis via de novo pathway; N(2)-formyl-N(1)-(5-phospho-D-ribosyl)glycinamide from N(1)-(5-phospho-D-ribosyl)glycinamide (formate route): step 1/1. Its function is as follows. Involved in the de novo purine biosynthesis. Catalyzes the transfer of formate to 5-phospho-ribosyl-glycinamide (GAR), producing 5-phospho-ribosyl-N-formylglycinamide (FGAR). Formate is provided by PurU via hydrolysis of 10-formyl-tetrahydrofolate. This is Formate-dependent phosphoribosylglycinamide formyltransferase from Mycolicibacterium smegmatis (strain ATCC 700084 / mc(2)155) (Mycobacterium smegmatis).